The sequence spans 211 residues: tRNA (guanine-N(7)-)-methyltransferase (211 aa).

S-adenosyl-L-methionine contacts are provided by E44, D69, D96, and D118. Residue D118 is part of the active site. K122 is a binding site for substrate. Residues 124-129 (RHEKRR) are interaction with RNA. Residues D154 and 191 to 194 (TEYE) each bind substrate.

Belongs to the class I-like SAM-binding methyltransferase superfamily. TrmB family.

The enzyme catalyses guanosine(46) in tRNA + S-adenosyl-L-methionine = N(7)-methylguanosine(46) in tRNA + S-adenosyl-L-homocysteine. Its pathway is tRNA modification; N(7)-methylguanine-tRNA biosynthesis. In terms of biological role, catalyzes the formation of N(7)-methylguanine at position 46 (m7G46) in tRNA. The chain is tRNA (guanine-N(7)-)-methyltransferase from Streptococcus equi subsp. zooepidemicus (strain MGCS10565).